The primary structure comprises 233 residues: Germin-like protein (233 aa).

The N-terminal stretch at 1-22 (MEAYKMFAFVVLLATTLYQAYA) is a signal peptide. A disulfide bridge links Cys32 with Cys49. Positions 63–215 (RGLNMPANTD…RPSISMRIWS (153 aa)) constitute a Cupin type-1 domain. His111, His113, Glu118, and His162 together coordinate Mn(2+).

The protein belongs to the germin family. In terms of assembly, oligomer (believed to be a pentamer but probably hexamer). In terms of tissue distribution, expressed at high levels in unstressed roots.

The protein resides in the secreted. It localises to the extracellular space. The protein localises to the apoplast. Its function is as follows. May be involved in seed germination. This Mesembryanthemum crystallinum (Common ice plant) protein is Germin-like protein.